Reading from the N-terminus, the 22-residue chain is GLVSGLLNSVTGLLGNLAGGGL.

This sequence belongs to the frog skin active peptide (FSAP) family. Plasticin subfamily. As to quaternary structure, exhibits a propensity to self-association and forms helical oligomers in membrane-mimetic environments. In terms of tissue distribution, expressed by the skin glands.

The protein localises to the secreted. It localises to the target cell membrane. Functionally, has no antimicrobial activity against Gram-negative bacterium E.coli ATCC 25922, Gram-positive bacterium S.epidermidis ATCC 12228 and against fungus C.albicans ATCC 24433 at concentrations up to 100 uM. Has an anti-inflammatory effect, since it inhibits the production of the pro-inflammatory cytokines TNF-alpha and IL-1 beta. Has high activity of stimulation of insulin release, which may protect the species from being eaten by predators by causing fatal hypoglycemia. Is not cytotoxic to cancer line cells. Does not show hemolysis on mouse erythrocytes. Adopts a mixture of alpha-helical and beta-sheet structures. The polypeptide is Plasticin-TR (Phyllomedusa trinitatis (Trinidad leaf frog)).